The chain runs to 491 residues: Cobyric acid synthase (491 aa).

The GATase cobBQ-type domain occupies 250–439; it reads EVTIAVIRLP…LHGIFDNGAW (190 aa). C331 functions as the Nucleophile in the catalytic mechanism. H431 is an active-site residue.

This sequence belongs to the CobB/CobQ family. CobQ subfamily.

It participates in cofactor biosynthesis; adenosylcobalamin biosynthesis. Catalyzes amidations at positions B, D, E, and G on adenosylcobyrinic A,C-diamide. NH(2) groups are provided by glutamine, and one molecule of ATP is hydrogenolyzed for each amidation. The chain is Cobyric acid synthase from Synechococcus elongatus (strain ATCC 33912 / PCC 7942 / FACHB-805) (Anacystis nidulans R2).